Here is a 1643-residue protein sequence, read N- to C-terminus: Neurexin-3 (1643 aa).

An N-terminal signal peptide occupies residues 1-27 (MSSTLHSVFFTLKVSILLGSLLGLCLG). One can recognise a Laminin G-like 1 domain in the interval 28-202 (LEFMGLPNQW…GVQMDAEGPC (175 aa)). At 28–1568 (LEFMGLPNQW…EVIRESSSTT (1541 aa)) the chain is on the extracellular side. 2 N-linked (GlcNAc...) asparagine glycosylation sites follow: Asn58 and Asn105. The region spanning 198-235 (AEGPCGERPCENGGICFLLDGHPTCDCSTTGYGGKLCS) is the EGF-like 1 domain. Intrachain disulfides connect Cys202/Cys213, Cys207/Cys222, and Cys224/Cys234. Laminin G-like domains follow at residues 258-440 (VATF…VFKC) and 447-639 (DPIN…KSSC). Asp304, Leu321, and Met374 together coordinate Ca(2+). Cystine bridges form between Cys404/Cys440, Cys610/Cys639, Cys647/Cys658, Cys652/Cys667, and Cys669/Cys679. The region spanning 643 to 680 (SAKQCDSYPCKNNAVCKDGWNRFICDCTGTGYWGRTCE) is the EGF-like 2 domain. Laminin G-like domains follow at residues 685–857 (ILSY…IDYC) and 871–1046 (DPVT…ERGC). Ca(2+) is bound by residues Asp732 and Leu749. Asn757 is a glycosylation site (N-linked (GlcNAc...) asparagine). A Ca(2+)-binding site is contributed by Arg807. Intrachain disulfides connect Cys1018–Cys1046, Cys1053–Cys1064, Cys1058–Cys1073, and Cys1075–Cys1085. The 38-residue stretch at 1049-1086 (PSTTCQEDSCANQGVCMQQWEGFTCDCSMTSYSGNQCN) folds into the EGF-like 3 domain. The Laminin G-like 6 domain maps to 1090–1260 (ATYIFGKSGG…NPNIKINGSV (171 aa)). Ca(2+)-binding residues include Asp1142 and Ile1159. Asn1189 carries an N-linked (GlcNAc...) asparagine glycan. Residues Ile1211 and Asn1213 each coordinate Ca(2+). N-linked (GlcNAc...) asparagine glycans are attached at residues Asn1257 and Asn1301. The tract at residues 1294–1318 (ATTTTRKNRSTASIQPTSDDLVSSA) is disordered. Residues 1303-1318 (STASIQPTSDDLVSSA) are compositionally biased toward polar residues. Ser1317 carries an O-linked (Xyl...) (heparan sulfate) serine glycan. A helical membrane pass occupies residues 1569–1589 (GMVVGIVAAAALCILILLYAM). At 1590 to 1643 (YKYRNRDEGSYQVDETRNYISNSAQSNGTLMKEKQQSSKSGHKKQKNKDREYYV) the chain is on the cytoplasmic side. Residues 1611-1643 (NSAQSNGTLMKEKQQSSKSGHKKQKNKDREYYV) form a disordered region.

It belongs to the neurexin family. In terms of assembly, the laminin G-like domain 2 binds to NXPH1. Specific isoforms bind to alpha-dystroglycan. The cytoplasmic C-terminal region binds to CASK. Specific isoforms bind neuroligins NLGN1, NLGN2 and NLGN3. Interacts with CLSTN3. Post-translationally, O-glycosylated; contains heparan sulfate. Heparan sulfate attachment is required for synapse development by mediating interactions with neuroligins. Expressed in the blood vessel walls (at protein level). Highly expressed in brain, lung, and pancreas; a lower level of expression is detectable in heart, placenta, liver, and kidney, whereas no expression can be observed in skeletal muscle. Isoform 4a is heart-specific.

Its subcellular location is the presynaptic cell membrane. In terms of biological role, neuronal cell surface protein that may be involved in cell recognition and cell adhesion. May mediate intracellular signaling. This chain is Neurexin-3 (NRXN3), found in Homo sapiens (Human).